The following is a 733-amino-acid chain: Zinc finger transcription factor ace1 (733 aa).

Residues 1-11 (MSFSNPRRRTP) are compositionally biased toward basic residues. Disordered stretches follow at residues 1–22 (MSFS…CEHG), 34–63 (GATF…SQSA), and 89–183 (ASLS…SSTT). Low complexity predominate over residues 39-49 (SPTSPSASSAA). Residues 132–142 (LRPRSVRRTRN) show a composition bias toward basic residues. The span at 148–158 (GIGSSVVSTND) shows a compositional bias: polar residues. The segment covering 171-183 (ASALTRSAASSTT) has biased composition (low complexity). 3 consecutive C2H2-type zinc fingers follow at residues 400–424 (KKCR…EKTH), 428–456 (WKCP…NDKH), and 463–488 (YECL…EKAH). A disordered region spans residues 497–533 (TNGKKAPSQNGSTAQQTPPLANVSTPSSTPSYSVPTP). Positions 503–515 (PSQNGSTAQQTPP) are enriched in polar residues. Residues 519 to 530 (VSTPSSTPSYSV) are compositionally biased toward low complexity.

The protein resides in the nucleus. Its function is as follows. Binds to the promoter of the cbh1 gene and activates transcription. The chain is Zinc finger transcription factor ace1 (ace1) from Hypocrea jecorina (Trichoderma reesei).